Reading from the N-terminus, the 252-residue chain is Imidazole glycerol phosphate synthase subunit HisF (252 aa).

Residues Asp-11 and Asp-130 contribute to the active site.

Belongs to the HisA/HisF family. Heterodimer of HisH and HisF.

The protein localises to the cytoplasm. The enzyme catalyses 5-[(5-phospho-1-deoxy-D-ribulos-1-ylimino)methylamino]-1-(5-phospho-beta-D-ribosyl)imidazole-4-carboxamide + L-glutamine = D-erythro-1-(imidazol-4-yl)glycerol 3-phosphate + 5-amino-1-(5-phospho-beta-D-ribosyl)imidazole-4-carboxamide + L-glutamate + H(+). It functions in the pathway amino-acid biosynthesis; L-histidine biosynthesis; L-histidine from 5-phospho-alpha-D-ribose 1-diphosphate: step 5/9. Its function is as follows. IGPS catalyzes the conversion of PRFAR and glutamine to IGP, AICAR and glutamate. The HisF subunit catalyzes the cyclization activity that produces IGP and AICAR from PRFAR using the ammonia provided by the HisH subunit. The polypeptide is Imidazole glycerol phosphate synthase subunit HisF (Staphylococcus epidermidis (strain ATCC 12228 / FDA PCI 1200)).